A 316-amino-acid polypeptide reads, in one-letter code: MSSQKQLEGMIFDVQSFSVHDGPGCRTTVFLNGCPLSCKWCANPESWTVRPHMMFSELSCQYENGCTVCHGKCKNGALSFNLDNKPVIDWNICKDCESFECVNSCYYNAFKLCAKPYTVDELVQVIKRDSNNWRSNGGVTFSGGEPLLQHEFLHEVLLKCHEVNIHTAIETSACVSNEVFNKIFNDIDFAFIDIKHMDREKHKEQTGVYNDLILENISNLANSDWNGRLVLRVPVISGFNDSDENISDIISFMHKNNLVEINLLPFHRLGESKWTQLGKEYEYSDKGDVDEGHLEELQDIFLDNGIACYVGHETAF.

The 288-residue stretch at 20–307 (HDGPGCRTTV…QDIFLDNGIA (288 aa)) folds into the Radical SAM core domain. Positions 34, 38, 41, 60, 66, 69, and 105 each coordinate [4Fe-4S] cluster. 40–42 (WCA) serves as a coordination point for S-adenosyl-L-methionine. The region spanning 84 to 115 (NKPVIDWNICKDCESFECVNSCYYNAFKLCAK) is the 4Fe-4S ferredoxin-type domain. Residues glycine 144, 193 to 195 (DIK), and histidine 267 each bind S-adenosyl-L-methionine.

The protein belongs to the organic radical-activating enzymes family. As to quaternary structure, monomer. [4Fe-4S] cluster serves as cofactor.

It catalyses the reaction glycyl-[protein] + reduced [flavodoxin] + S-adenosyl-L-methionine = glycin-2-yl radical-[protein] + semiquinone [flavodoxin] + 5'-deoxyadenosine + L-methionine + H(+). Its function is as follows. Catalyzes activation of 4-hydroxyphenylacetate decarboxylase under anaerobic conditions by generation of an organic free radical on a glycine residue, via a homolytic cleavage of S-adenosyl-L-methionine (SAM). The protein is 4-hydroxyphenylacetate decarboxylase activating enzyme of Clostridioides difficile (strain 630) (Peptoclostridium difficile).